Reading from the N-terminus, the 249-residue chain is MNAVITSLVFISLVGVGYSWRYPRNADQTFWAFRTCQRQSEGAKSLREWYRWNLPNDEDTHCYVKCVWLHLGLYNEQNKSLRVDRIMEQFNSRSVAIPGGINTISGPTDGTCKDIYDKTINFFNNNVNDLRTAFYGIKKLSDEWFTQNSNTKPKGTKISDFCNAENREKGGADCQHACSAYYYRLVDEDNEPIHFRNLNILGITDEQFASCVKASKNKQGCKVADTMYNCVEKHNSQALKILDNQSPTY.

A signal peptide spans 1 to 19; sequence MNAVITSLVFISLVGVGYS. 2 disulfide bridges follow: cysteine 36-cysteine 66 and cysteine 62-cysteine 112. Tryptophan 49 provides a ligand contact to thromboxane A2. A leukotriene C4-binding site is contributed by tryptophan 52. Thromboxane A2 is bound at residue tyrosine 63. The leukotriene C4 site is built by glycine 136 and lysine 154. Residue lysine 154 coordinates thromboxane A2. Intrachain disulfides connect cysteine 162–cysteine 178, cysteine 174–cysteine 221, and cysteine 211–cysteine 230.

Belongs to the PBP/GOBP family.

It localises to the secreted. Modulates blood feeding of female sandflies on vertebrate species by binding and sequestering different mediators involved in the host response. Binds leukotriene C4, leukotriene D4, leukotriene E4 and U-46619, a stable analog of thromboxane A2. Does not bind histamine or serotonin. Inhibits platelet aggregation induced by low concentrations of collagen in thromboxane A2-dependent manner. In Phlebotomus duboscqi (Sandfly), this protein is Long form salivary protein D7L.